The sequence spans 179 residues: Large ribosomal subunit protein uL5 (179 aa).

This sequence belongs to the universal ribosomal protein uL5 family. In terms of assembly, part of the 50S ribosomal subunit; part of the 5S rRNA/L5/L18/L25 subcomplex. Contacts the 5S rRNA and the P site tRNA. Forms a bridge to the 30S subunit in the 70S ribosome.

Its function is as follows. This is one of the proteins that bind and probably mediate the attachment of the 5S RNA into the large ribosomal subunit, where it forms part of the central protuberance. In the 70S ribosome it contacts protein S13 of the 30S subunit (bridge B1b), connecting the 2 subunits; this bridge is implicated in subunit movement. Contacts the P site tRNA; the 5S rRNA and some of its associated proteins might help stabilize positioning of ribosome-bound tRNAs. This chain is Large ribosomal subunit protein uL5, found in Vibrio parahaemolyticus serotype O3:K6 (strain RIMD 2210633).